We begin with the raw amino-acid sequence, 1351 residues long: Tripartite motif-containing protein 66 (1351 aa).

The segment at 105–150 (MARNCSECKEKRAAHILCTYCNRWLCSSCTEEHRHSPVPGGPFFPR) adopts a B box-type 1; atypical zinc-finger fold. 8 residues coordinate Zn(2+): Cys-109, Cys-112, Cys-133, His-139, Cys-169, His-172, Cys-192, and His-197. Residues 164-205 (DFTLYCPLHTQEVLKLFCETCDMLTCHSCLVVEHKEHRCRHV) form a B box-type 2 zinc finger. Residues 234–304 (AKQIEDRIFE…IMVLNRQFEH (71 aa)) adopt a coiled-coil conformation. Disordered stretches follow at residues 542-608 (FGHH…CSQN), 663-730 (APVQ…VRKH), and 857-895 (CPLQSIPPVSDMQPETGSSSSSGRTSGSLCPRDGADPSL). The span at 560–588 (QLPPPPPPLPHPPPPLPPPPQQPHPPLPP) shows a compositional bias: pro residues. The span at 664 to 676 (PVQSQSQEETLQA) shows a compositional bias: polar residues. Low complexity predominate over residues 872 to 884 (TGSSSSSGRTSGS). Residues 995–999 (PYVRL) carry the PxVxL motif motif. Positions 1067–1098 (TSLAGQRPPEVEGTSPEEHRLIPRTPGAKKGP) are disordered. The segment at 1105 to 1152 (EDFCAVCLNGGELLCCDRCPKVFHLSCHVPALLSFPGGEWVCTLCRSL) adopts a PHD-type zinc-finger fold. The 107-residue stretch at 1176-1282 (GLSMYDQKKC…VFFEGWLKEI (107 aa)) folds into the Bromo domain. The disordered stretch occupies residues 1289 to 1351 (AQPRQEDSDS…FRLANSISQV (63 aa)).

Can form homodimers and heterodimers. Interacts with CBX5, CBX1 and CBX3 via PxVxL motif.

It is found in the nucleus. May function as transcription repressor; The repressive effects are mediated, at least in part, by recruitment of deacetylase activity. May play a role as negative regulator of postmeiotic genes acting through CBX3 complex formation and centromere association. The sequence is that of Tripartite motif-containing protein 66 (TRIM66) from Homo sapiens (Human).